A 311-amino-acid polypeptide reads, in one-letter code: Dermonecrotic toxin (311 aa).

The N-terminal stretch at M1–T21 is a signal peptide. Residues D22–R26 constitute a propeptide that is removed on maturation. H38 is a catalytic residue. Residues E58 and D60 each coordinate Mg(2+). H73 (nucleophile) is an active-site residue. Cysteines 77 and 83 form a disulfide. D117 lines the Mg(2+) pocket.

It belongs to the arthropod phospholipase D family. Class I subfamily. It depends on Mg(2+) as a cofactor. Expressed by the venom gland.

The protein resides in the secreted. The enzyme catalyses an N-(acyl)-sphingosylphosphocholine = an N-(acyl)-sphingosyl-1,3-cyclic phosphate + choline. It carries out the reaction an N-(acyl)-sphingosylphosphoethanolamine = an N-(acyl)-sphingosyl-1,3-cyclic phosphate + ethanolamine. The catalysed reaction is a 1-acyl-sn-glycero-3-phosphocholine = a 1-acyl-sn-glycero-2,3-cyclic phosphate + choline. It catalyses the reaction a 1-acyl-sn-glycero-3-phosphoethanolamine = a 1-acyl-sn-glycero-2,3-cyclic phosphate + ethanolamine. Catalytic activity and hemolysis are inhibited by divalent ion chelators (1,10-phenanthroline, EDTA, and EGTA). Functionally, dermonecrotic toxins cleave the phosphodiester linkage between the phosphate and headgroup of certain phospholipids (sphingolipid and lysolipid substrates), forming an alcohol (often choline) and a cyclic phosphate. This toxin acts on sphingomyelin (SM). It may also act on ceramide phosphoethanolamine (CPE), lysophosphatidylcholine (LPC) and lysophosphatidylethanolamine (LPE), but not on lysophosphatidylserine (LPS), and lysophosphatidylglycerol (LPG). It acts by transphosphatidylation, releasing exclusively cyclic phosphate products as second products. Shows complement-dependent hemolysis. Also induces dermonecrosis, vascular permeability, edema, inflammatory response, and platelet aggregation. This is Dermonecrotic toxin from Loxosceles laeta (South American recluse spider).